The primary structure comprises 104 residues: Cytochrome c oxidase assembly factor 6 (104 aa).

The disordered stretch occupies residues 1–22; the sequence is MGLFSFDGGKKESQPPNTRSQR. The CHCH domain maps to 22 to 76; it reads RKLCWESRDAFFQCLDKADILDAMDPKNSKSIKSHCKVENEKFEENCAHSWIKYF. Positions 25 to 35 match the Cx9C motif motif; sequence CWESRDAFFQC. Disulfide bonds link cysteine 25–cysteine 68 and cysteine 35–cysteine 57. The Cx10C motif signature appears at 57–68; that stretch reads CKVENEKFEENC.

The protein belongs to the cytochrome c oxidase subunit 6B family. Interacts with COX2.

It is found in the cytoplasm. It localises to the nucleus. Its subcellular location is the mitochondrion intermembrane space. Involved in the maturation of the mitochondrial respiratory chain complex IV subunit MT-CO2/COX2. Thereby, may regulate early steps of complex IV assembly. Mitochondrial respiratory chain complex IV or cytochrome c oxidase is the component of the respiratory chain that catalyzes the transfer of electrons from intermembrane space cytochrome c to molecular oxygen in the matrix and as a consequence contributes to the proton gradient involved in mitochondrial ATP synthesis. May also be required for efficient formation of respiratory supercomplexes comprised of complexes III and IV. In Saccharomyces cerevisiae (strain ATCC 204508 / S288c) (Baker's yeast), this protein is Cytochrome c oxidase assembly factor 6.